Consider the following 249-residue polypeptide: Triosephosphate isomerase (249 aa).

Residues N12 and K14 each contribute to the substrate site. K14 is subject to N6-acetyllysine. Residue N16 is modified to Deamidated asparagine. 3'-nitrotyrosine is present on Y68. A Deamidated asparagine modification is found at N72. The residue at position 80 (S80) is a Phosphoserine. The Electrophile role is filled by H96. S106 carries the phosphoserine modification. Residue K142 forms a Glycyl lysine isopeptide (Lys-Gly) (interchain with G-Cter in SUMO1) linkage. Position 149 is an N6-succinyllysine (K149). K156 is modified (N6-acetyllysine; alternate). Position 156 is an N6-succinyllysine; alternate (K156). Phosphoserine is present on S159. E166 (proton acceptor) is an active-site residue. Phosphothreonine is present on T173. K194 is modified (N6-acetyllysine; alternate). Position 194 is an N6-succinyllysine; alternate (K194). N6-methyllysine; alternate is present on K194. The residue at position 198 (S198) is a Phosphoserine. The residue at position 209 (Y209) is a 3'-nitrotyrosine. A Phosphoserine modification is found at S212. T214 carries the phosphothreonine modification. The residue at position 223 (S223) is a Phosphoserine. K238 carries the N6-acetyllysine modification.

Belongs to the triosephosphate isomerase family. Homodimer. Asn-16 and Asn-72 undergo deamidation which gives rise to four extra negative charges. These are expected to decrease subunit-subunit interactions and so expose the hydrophobic interface to the aqueous environment.

It is found in the cytoplasm. It carries out the reaction D-glyceraldehyde 3-phosphate = dihydroxyacetone phosphate. It catalyses the reaction dihydroxyacetone phosphate = methylglyoxal + phosphate. It functions in the pathway carbohydrate degradation; glycolysis; D-glyceraldehyde 3-phosphate from glycerone phosphate: step 1/1. It participates in carbohydrate biosynthesis; gluconeogenesis. Functionally, triosephosphate isomerase is an extremely efficient metabolic enzyme that catalyzes the interconversion between dihydroxyacetone phosphate (DHAP) and D-glyceraldehyde-3-phosphate (G3P) in glycolysis and gluconeogenesis. Its function is as follows. It is also responsible for the non-negligible production of methylglyoxal a reactive cytotoxic side-product that modifies and can alter proteins, DNA and lipids. The chain is Triosephosphate isomerase (TPI1) from Oryctolagus cuniculus (Rabbit).